Reading from the N-terminus, the 267-residue chain is Sulfur carrier protein FdhD (267 aa).

C108 serves as the catalytic Cysteine persulfide intermediate.

Belongs to the FdhD family.

The protein resides in the cytoplasm. Required for formate dehydrogenase (FDH) activity. Acts as a sulfur carrier protein that transfers sulfur from IscS to the molybdenum cofactor prior to its insertion into FDH. In Shouchella clausii (strain KSM-K16) (Alkalihalobacillus clausii), this protein is Sulfur carrier protein FdhD.